The sequence spans 301 residues: GTPase Era (301 aa).

The region spanning 7 to 175 (YCGFIAIVGR…AAIVRKHLPE (169 aa)) is the Era-type G domain. Residues 15 to 22 (GRPNVGKS) are G1. 15-22 (GRPNVGKS) contributes to the GTP binding site. Residues 41 to 45 (QTTRH) form a G2 region. Positions 62 to 65 (DTPG) are G3. Residues 62-66 (DTPGL) and 124-127 (NKVD) contribute to the GTP site. The segment at 124 to 127 (NKVD) is G4. The tract at residues 154-156 (ISA) is G5. A KH type-2 domain is found at 206–283 (LGAELPYSVT…HLELWVKVKS (78 aa)).

Belongs to the TRAFAC class TrmE-Era-EngA-EngB-Septin-like GTPase superfamily. Era GTPase family. As to quaternary structure, monomer.

The protein localises to the cytoplasm. Its subcellular location is the cell inner membrane. In terms of biological role, an essential GTPase that binds both GDP and GTP, with rapid nucleotide exchange. Plays a role in 16S rRNA processing and 30S ribosomal subunit biogenesis and possibly also in cell cycle regulation and energy metabolism. The polypeptide is GTPase Era (Escherichia coli (strain K12 / DH10B)).